The sequence spans 1380 residues: DNA-directed RNA polymerase subunit beta (1380 aa).

Belongs to the RNA polymerase beta chain family. In terms of assembly, the RNAP catalytic core consists of 2 alpha, 1 beta, 1 beta' and 1 omega subunit. When a sigma factor is associated with the core the holoenzyme is formed, which can initiate transcription.

It carries out the reaction RNA(n) + a ribonucleoside 5'-triphosphate = RNA(n+1) + diphosphate. Functionally, DNA-dependent RNA polymerase catalyzes the transcription of DNA into RNA using the four ribonucleoside triphosphates as substrates. The chain is DNA-directed RNA polymerase subunit beta from Ehrlichia chaffeensis (strain ATCC CRL-10679 / Arkansas).